A 318-amino-acid chain; its full sequence is Protein-methionine-sulfoxide reductase catalytic subunit MsrP (318 aa).

The tat-type signal signal peptide spans 1–40; the sequence is MNRFTRYDVTPEVIFNQRRQIIKAMGLGAAALSLPNIGFA. Mo-molybdopterin contacts are provided by residues Asn-72, 75 to 76, Cys-130, Thr-165, Asn-217, Arg-222, and 233 to 235; these read YE and SIK.

The protein belongs to the MsrP family. Heterodimer of a catalytic subunit (MsrP) and a heme-binding subunit (MsrQ). It depends on Mo-molybdopterin as a cofactor. Post-translationally, predicted to be exported by the Tat system. The position of the signal peptide cleavage has not been experimentally proven.

It is found in the periplasm. It catalyses the reaction L-methionyl-[protein] + a quinone + H2O = L-methionyl-(S)-S-oxide-[protein] + a quinol. The enzyme catalyses L-methionyl-[protein] + a quinone + H2O = L-methionyl-(R)-S-oxide-[protein] + a quinol. Its function is as follows. Part of the MsrPQ system that repairs oxidized periplasmic proteins containing methionine sulfoxide residues (Met-O), using respiratory chain electrons. Thus protects these proteins from oxidative-stress damage caused by reactive species of oxygen and chlorine generated by the host defense mechanisms. MsrPQ is essential for the maintenance of envelope integrity under bleach stress, rescuing a wide series of structurally unrelated periplasmic proteins from methionine oxidation. The catalytic subunit MsrP is non-stereospecific, being able to reduce both (R-) and (S-) diastereoisomers of methionine sulfoxide. This Actinobacillus pleuropneumoniae serotype 3 (strain JL03) protein is Protein-methionine-sulfoxide reductase catalytic subunit MsrP.